The primary structure comprises 367 residues: Phosphoribosylaminoimidazole-succinocarboxamide synthase (367 aa).

The protein belongs to the SAICAR synthetase family.

The enzyme catalyses 5-amino-1-(5-phospho-D-ribosyl)imidazole-4-carboxylate + L-aspartate + ATP = (2S)-2-[5-amino-1-(5-phospho-beta-D-ribosyl)imidazole-4-carboxamido]succinate + ADP + phosphate + 2 H(+). Its pathway is purine metabolism; IMP biosynthesis via de novo pathway; 5-amino-1-(5-phospho-D-ribosyl)imidazole-4-carboxamide from 5-amino-1-(5-phospho-D-ribosyl)imidazole-4-carboxylate: step 1/2. The polypeptide is Phosphoribosylaminoimidazole-succinocarboxamide synthase (Saccharophagus degradans (strain 2-40 / ATCC 43961 / DSM 17024)).